We begin with the raw amino-acid sequence, 285 residues long: 2,3,4,5-tetrahydropyridine-2,6-dicarboxylate N-succinyltransferase (285 aa).

Arginine 111 and aspartate 148 together coordinate substrate.

It belongs to the transferase hexapeptide repeat family. Homotrimer.

It localises to the cytoplasm. The enzyme catalyses (S)-2,3,4,5-tetrahydrodipicolinate + succinyl-CoA + H2O = (S)-2-succinylamino-6-oxoheptanedioate + CoA. It participates in amino-acid biosynthesis; L-lysine biosynthesis via DAP pathway; LL-2,6-diaminopimelate from (S)-tetrahydrodipicolinate (succinylase route): step 1/3. The chain is 2,3,4,5-tetrahydropyridine-2,6-dicarboxylate N-succinyltransferase from Sinorhizobium fredii (strain NBRC 101917 / NGR234).